The chain runs to 239 residues: Claudin-14 (239 aa).

The Cytoplasmic portion of the chain corresponds to 1–7 (MASTAVQ). The helical transmembrane segment at 8-28 (LLGFLLSFLGMVGTLITTILP) threads the bilayer. The Extracellular segment spans residues 29-81 (HWRRTAHVGTNILTAVSYLKGLWMECVWHSTGIYQCQIYRSLLALPRDLQAAR). Residues 82-102 (ALMVISCLLSGMACACAVVGM) traverse the membrane as a helical segment. At 103–115 (KCTRCAKGTPAKT) the chain is on the cytoplasmic side. Residues 116-136 (TFAVLGGALFLLAGLLCMVAV) traverse the membrane as a helical segment. The Extracellular segment spans residues 137–162 (SWTTNDVVQNFYNPLLPSGMKFEIGQ). A helical membrane pass occupies residues 163 to 183 (ALYLGFISSSLSLIGGTLLCL). The Cytoplasmic segment spans residues 184 to 239 (SCQDEAPYRPYPPQSRAGATTTATAPAYRPPAAYKDNRAPSVTSAAHSGYRLNDYV).

This sequence belongs to the claudin family. As to expression, expressed in all sensory epithelia of the inner ear vestibular organs, as well as in liver and kidney.

It is found in the cell junction. The protein resides in the tight junction. Its subcellular location is the cell membrane. Its function is as follows. Plays a major role in tight junction-specific obliteration of the intercellular space, through calcium-independent cell-adhesion activity. This chain is Claudin-14 (Cldn14), found in Mus musculus (Mouse).